A 1604-amino-acid chain; its full sequence is Ubiquitin carboxyl-terminal hydrolase 32 (1604 aa).

3 consecutive EF-hand domains span residues 91 to 126, 228 to 263, and 264 to 299; these read KDEE…VDGK, IRPS…CCRG, and PLAE…LLEV. Asp-241, Asn-243, Asp-245, His-247, Glu-252, Asp-277, Asp-279, Asp-281, and Glu-288 together coordinate Ca(2+). The 217-residue stretch at 369-585 folds into the DUSP domain; the sequence is ATPEEEGQII…SNLALPRPVI (217 aa). The USP domain maps to 734–1567; that stretch reads TGLSNLGNTC…SAYILFYEQQ (834 aa). Cys-743 acts as the Nucleophile in catalysis. At Tyr-1173 the chain carries Phosphotyrosine. Ser-1350 carries the phosphoserine modification. Residues 1353-1432 are disordered; that stretch reads EEDVLLSKSP…SKENLDTSKE (80 aa). Over residues 1360 to 1370 the composition is skewed to polar residues; the sequence is KSPSSLSANVT. The segment covering 1371–1399 has biased composition (low complexity); that stretch reads SSPKGSPSSSRKSGASCPSSKNSSPNSSP. 2 positions are modified to phosphoserine: Ser-1372 and Ser-1376. Polar residues predominate over residues 1415-1424; that stretch reads GSKNKLSNSK. The residue at position 1454 (Ser-1454) is a Phosphoserine. The segment at 1484–1504 is disordered; the sequence is SNGQLGNHSEEDSTDDQREET. Residues 1491-1504 show a composition bias toward basic and acidic residues; sequence HSEEDSTDDQREET. The Proton acceptor role is filled by His-1526. At Ser-1588 the chain carries Phosphoserine. Cys-1601 is modified (cysteine methyl ester). Cys-1601 is lipidated: S-farnesyl cysteine. A propeptide spans 1602-1604 (removed in mature form); it reads VLQ.

Belongs to the peptidase C19 family.

The protein resides in the golgi apparatus membrane. It catalyses the reaction Thiol-dependent hydrolysis of ester, thioester, amide, peptide and isopeptide bonds formed by the C-terminal Gly of ubiquitin (a 76-residue protein attached to proteins as an intracellular targeting signal).. Deubiquitinase that can remove conjugated ubiquitin from target proteins, such as RAB7A and LAMTOR1. Acts as a positive regulator of the mTORC1 signaling by mediating deubiquitination of LAMTOR1, thereby promoting the association between LAMTOR1 and the lysosomal V-ATPase complex and subsequent activation of the mTORC1 complex. The chain is Ubiquitin carboxyl-terminal hydrolase 32 from Mus musculus (Mouse).